The chain runs to 463 residues: NF-kappa-B-activating protein (463 aa).

A compositionally biased stretch (basic residues) spans 1 to 14; it reads MRSRSRSRSRQRER. The disordered stretch occupies residues 1-358; that stretch reads MRSRSRSRSR…GGSLNQKDFG (358 aa). Composition is skewed to basic and acidic residues over residues 15 to 29 and 39 to 71; these read RRSD…ERRT and VSRE…DAVP. The segment covering 78 to 98 has biased composition (low complexity); the sequence is SSPSRSSSSSSSDRSSSSRSP. Basic and acidic residues predominate over residues 107 to 125; the sequence is KSVERWPNDRYHENNDRRQ. A phosphoserine mark is found at S136, S189, and S191. Position 195 is a phosphothreonine (T195). Over residues 208–238 the composition is skewed to basic residues; the sequence is PKKKKKKGKRKHKKSEKKSKKKSKKSKKKKS. Residues 241–267 are compositionally biased toward low complexity; the sequence is ESSSSSSSSSSEDSSDESSSSSSSSSS. A compositionally biased stretch (acidic residues) spans 268 to 278; sequence DSEDESEEEDV. A compositionally biased stretch (basic and acidic residues) spans 279–288; the sequence is WLEKTADGIK. Positions 289–312 are enriched in basic residues; the sequence is KPKKKKSSTSKKDKKSKKKKKKRK. Positions 330 to 340 are enriched in basic and acidic residues; it reads KNKESASHNDE.

The protein belongs to the NKAP family.

It is found in the nucleus. Tumor suppressor involved in maintaining genome integrity. Influences gene expression and mRNA splicing. In Drosophila melanogaster (Fruit fly), this protein is NF-kappa-B-activating protein.